A 379-amino-acid chain; its full sequence is MLKRCGRRLLLALAGALLACLLVLTADPPPPPLPAERGRRALRSLAGPAGAAPAPGLGAAAAAPGALVRDVHSLSEYFSLLTRARRDAGPPPGAAPRPADGHPRPLAEPLAPRDVFIAVKTTKKFHRARLDLLLETWISRHKEMTFIFTDGEDEALARHTGNVVITNCSAAHSRQALSCKMAVEYDRFIESGRKWFCHVDDDNYVNLRALLRLLASYPHTRDVYVGKPSLDRPIQAMERVSENKVRPVHFWFATGGAGFCISRGLALKMSPWASGGHFMNTAERIRLPDDCTIGYIVEALLGVPLIRSGLFHSHLENLQQVPTSELHEQVTLSYGMFENKRNAVHVKGPFSVEADPSRFRSIHCHLYPDTPWCPRTAIF.

Over 1-8 the chain is Cytoplasmic; it reads MLKRCGRR. Residues 9–29 form a helical; Signal-anchor for type II membrane protein membrane-spanning segment; that stretch reads LLLALAGALLACLLVLTADPP. Over 30–379 the chain is Lumenal; it reads PPPLPAERGR…TPWCPRTAIF (350 aa). A disordered region spans residues 86 to 107; the sequence is RDAGPPPGAAPRPADGHPRPLA. Arginine 129 contacts substrate. The N-linked (GlcNAc...) asparagine glycan is linked to asparagine 167. Cystine bridges form between cysteine 168/cysteine 179 and cysteine 197/cysteine 260. Residue aspartate 201 participates in substrate binding. Position 202 (aspartate 202) interacts with Mn(2+). The active site involves aspartate 290. Histidine 314 serves as a coordination point for Mn(2+). An intrachain disulfide couples cysteine 364 to cysteine 373.

Belongs to the glycosyltransferase 31 family. Mn(2+) is required as a cofactor. Requires Co(2+) as cofactor. In terms of processing, a soluble form may be derived from the membrane form by proteolytic processing.

The protein localises to the golgi apparatus. Its subcellular location is the golgi apparatus membrane. It carries out the reaction 3-O-(alpha-L-fucosyl)-L-threonyl-[EGF-like domain protein] + UDP-N-acetyl-alpha-D-glucosamine = 3-O-(N-acetyl-beta-D-glucosaminyl-(1-&gt;3)-alpha-L-fucosyl)-L-threonyl-[EGF-like domain protein] + UDP + H(+). The enzyme catalyses 3-O-(alpha-L-fucosyl)-L-seryl-[EGF-like domain protein] + UDP-N-acetyl-alpha-D-glucosamine = 3-O-(N-acetyl-beta-D-glucosaminyl-(1-&gt;3)-alpha-L-fucosyl)-L-seryl-[EGF-like domain protein] + UDP + H(+). Functionally, glycosyltransferase that initiates the elongation of O-linked fucose residues attached to EGF-like repeats in the extracellular domain of Notch molecules. Modulates NOTCH1 activity by modifying O-fucose residues at specific EGF-like domains resulting in inhibition of NOTCH1 activation by JAG1 and enhancement of NOTCH1 activation by DLL1 via an increase in its binding to DLL1. Decreases the binding of JAG1 to NOTCH2 but not that of DLL1. Essential mediator of somite segmentation and patterning. This Homo sapiens (Human) protein is Beta-1,3-N-acetylglucosaminyltransferase lunatic fringe.